The primary structure comprises 89 residues: Co-chaperonin GroES (89 aa).

This sequence belongs to the GroES chaperonin family. As to quaternary structure, heptamer of 7 subunits arranged in a ring. Interacts with the chaperonin GroEL.

It localises to the cytoplasm. Functionally, together with the chaperonin GroEL, plays an essential role in assisting protein folding. The GroEL-GroES system forms a nano-cage that allows encapsulation of the non-native substrate proteins and provides a physical environment optimized to promote and accelerate protein folding. GroES binds to the apical surface of the GroEL ring, thereby capping the opening of the GroEL channel. This chain is Co-chaperonin GroES, found in Wolinella succinogenes (strain ATCC 29543 / DSM 1740 / CCUG 13145 / JCM 31913 / LMG 7466 / NCTC 11488 / FDC 602W) (Vibrio succinogenes).